The following is a 238-amino-acid chain: MESWQEDLLSAFLVVKNEDELFEVVKSTASKLGFDYCAYGMQSPLSIAEPKTIMLNNYPQAWQKRYIEQRYVKVDPTVQHCMVSLQPLVWSSQNAKTQEEKDFWEEARSYGLNVGWAQSSRDFIGTRGMLTLARSTDQLSEKEQKAQYTNMYWLTQTVHSSIAKIVNDVEFSQFNLYLTNREKEALRWTAEGKTSAEIAQIIGVTERTVNFHLCNSMQKLNVNNKISAAIRAVMLGLL.

Residues 170-236 form the HTH luxR-type domain; it reads EFSQFNLYLT…SAAIRAVMLG (67 aa). The segment at residues 195-214 is a DNA-binding region (H-T-H motif); sequence SAEIAQIIGVTERTVNFHLC.

It belongs to the autoinducer-regulated transcriptional regulatory protein family.

Positively regulates the expression of anoI. Required for biofilm formation and motility. Probably part of a quorum-sensing system with AnoI. This is Transcriptional activator protein AnoR from Acinetobacter nosocomialis.